A 63-amino-acid polypeptide reads, in one-letter code: Kappa-theraphotoxin-Gr3a (63 aa).

Residues 1–21 form the signal peptide; that stretch reads MKTSVFVLVLGLVLLFAVSFA. The propeptide occupies 22-29; it reads TEMEESAR. Disulfide bonds link Cys31/Cys45, Cys38/Cys50, and Cys44/Cys57.

This sequence belongs to the neurotoxin 10 (Hwtx-1) family. 63 (VsTx1) subfamily. In terms of tissue distribution, expressed by the venom gland.

It is found in the secreted. Functionally, inhibits sodium channels Nav1.7/SCN9A and potassium channels Kv11.1/KCNH2. Also binds the voltage-sensor domain of the potassium channel KvAP (from the archaeon Aeropyrum pernix) with very slow apparent binding kinetics and affects channel gating. Reaches its target by dynamically partitioning into anionic or zwitterionic headgroup lipid membranes. May bind to the open state of KvAP. The chain is Kappa-theraphotoxin-Gr3a from Grammostola rosea (Chilean rose tarantula).